The sequence spans 355 residues: Peptide chain release factor 1 (355 aa).

Residue Gln-234 is modified to N5-methylglutamine.

The protein belongs to the prokaryotic/mitochondrial release factor family. In terms of processing, methylated by PrmC. Methylation increases the termination efficiency of RF1.

The protein resides in the cytoplasm. Peptide chain release factor 1 directs the termination of translation in response to the peptide chain termination codons UAG and UAA. In Metamycoplasma arthritidis (strain 158L3-1) (Mycoplasma arthritidis), this protein is Peptide chain release factor 1.